The chain runs to 341 residues: Arfaptin-2 (341 aa).

The segment at 46-84 (NETSIVSGGYGGSGDGLIPTGSGRHPSHSTSPSGPGDEV) is disordered. The segment covering 65–81 (TGSGRHPSHSTSPSGPG) has biased composition (low complexity). A Phosphoserine modification is found at serine 72. Residues 121–321 (TVDLELELQI…NQKQLEQTLQ (201 aa)) form the AH domain.

As to quaternary structure, forms homodimers or heterodimers with ARFIP1. Interacts with RAC1. Specifically binds to GTP-bound ARF1 and ARF6, but binds to RAC1.GTP and RAC1.GDP with similar affinities. Interacts with ARL1. Interacts (via N-terminus) with IKBKB and IKBKG; these interactions inhibit activation of NF-kappa-B.

The protein resides in the golgi apparatus. Its subcellular location is the trans-Golgi network membrane. Plays a role in constitutive metalloproteinase (MMP) secretion from the trans Golgi network. May have important functions during vesicle biogenesis at certain cargo subdomains, which could be predominantly utilized by secreted MMPs, such as MMP7 and MMP2. Also involved in autophagy by regulating the starvation-dependent trafficking of ATG9A vesicles which deliver the phosphatidylinositol 4-kinase beta (PI4KB) to the autophagosome initiation site. Involved in phagophore growth during mitophagy by regulating ATG9A trafficking to mitochondria. In addition, plays a role in NF-kappa-B inhibition by interacting with IKBKB and IKBKG. This Mus musculus (Mouse) protein is Arfaptin-2.